The primary structure comprises 894 residues: MSSDKSIEKNTDTIASEVHEGDNHSNNLGSMEEEIKSTPSDQYEEIAIIPTEPLHSDKELNDKQQSLGHEAPTNVSREEPIGISGDEDTQITEQNVNEQRQETREPSSEIDLNEPLDVEKDVTTDVQAPNGLNIEKEYDAVKENEKVYADTKEVVSSPENREVTGKNSGGEKSSSSKFLDDESGTTTAANANDISISSEVTPERSSENDNNQIHITNEVAAGINLNENKEQKAAIEDGPVTAENLSSETARKVPPIPTQIINEKGDNSSENEVSAIPTTSSPPLPPRQNVATSTSPKLPPRGKQREQPPKTKNAVPPPLEEEMKSEKFRKNFEETKRNSYHHVPLTGSKTAQLESTAEINLIASRYRKTSHHLNKEGEETRESLQEGQSFLKSTFTSFLENLSEYNEVENVNEEDREMFKIDWSFWTQVVNDYATVASNEPENLEAHVTNGIPPQIRGIIWQLMANSKSREMEDIYETLLDTECLHEATIRRDLRRTKFVAEDKMESLYKVIKVYSVYDPDVGYTQGMGFIAAPLLINCENEAESFGLLVGLMKNYGLRELFLPGMPGLMLMLYQFDRLLEEHSPSLYNRLIREGISSTMYATQWFLTFFAYKFPLEFVLRIFDIVFVEGIEVLLKFAVNLMLKNEETLVKLRFDELLDFLKDELFNYYLMGNQDDASVVQMGLSNGNSFKGNDDGTFSYNVDLFVHDAMTGVYITPLTLRRYRGEYVEIHEKEQKKEDHYESLRIQNHQLQREAQKLEHDYSILNKENISAANELIQNRLNMEMLLDEKNDLINTITDIKSQIEEEIRKQNLPNPDASLPKADLREDLERTISRNNEVMRENGQLEERITELQAEIDELININKEQVSTASLLERDSKAKGRKGWTGFKKVFK.

Basic and acidic residues predominate over residues 1–23 (MSSDKSIEKNTDTIASEVHEGDN). The tract at residues 1–324 (MSSDKSIEKN…VPPPLEEEMK (324 aa)) is disordered. A phosphoserine mark is found at Ser-25 and Ser-30. A Phosphothreonine modification is found at Thr-89. Residues 134–164 (IEKEYDAVKENEKVYADTKEVVSSPENREVT) show a composition bias toward basic and acidic residues. Composition is skewed to polar residues over residues 184 to 200 (GTTTAANANDISISSEV) and 268 to 279 (SSENEVSAIPTT). Ser-389 is modified (phosphoserine). Positions 451–630 (GIPPQIRGII…RIFDIVFVEG (180 aa)) constitute a Rab-GAP TBC domain. Residues 732–872 (EKEQKKEDHY…INKEQVSTAS (141 aa)) are a coiled coil.

Belongs to the GYP5 family. As to quaternary structure, interacts with GYL1 and RVS167; and is part of SEC4-containing complexes.

Its subcellular location is the cytoplasm. The protein localises to the bud. It localises to the bud neck. GTPase-activating protein which accelerates the GTP hydrolysis rate of YPT1 and SEC4. Involved in ER to Golgi trafficking and polarized exocytosis. This Saccharomyces cerevisiae (strain ATCC 204508 / S288c) (Baker's yeast) protein is GTPase-activating protein GYP5 (GYP5).